The primary structure comprises 146 residues: Snaclec coagulation factor IX/factor X-binding protein subunit B2 (146 aa).

The first 23 residues, 1-23 (MGRLIFVSFGLLVVFLSLSGTAA), serve as a signal peptide directing secretion. 3 disulfide bridges follow: cysteine 25–cysteine 36, cysteine 53–cysteine 142, and cysteine 119–cysteine 134. Residues 32–143 (YEGHCYKPFN…CRMMANFVCE (112 aa)) form the C-type lectin domain.

It belongs to the snaclec family. Heterodimer of subunits A and B2; disulfide-linked. Expressed by the venom gland.

It is found in the secreted. In terms of biological role, anticoagulant protein which binds to the gamma-carboxyglutamic acid-domain regions of factors IX (F9) and factor X (F10) in the presence of calcium with a 1 to 1 stoichiometry. The protein is Snaclec coagulation factor IX/factor X-binding protein subunit B2 of Trimeresurus stejnegeri (Chinese green tree viper).